Here is a 149-residue protein sequence, read N- to C-terminus: Large ribosomal subunit protein uL15 (149 aa).

The segment at 8–49 is disordered; that stretch reads HDLRPAAGSNKPKTRVGRGEASKGKTAGRGTKGTGARKQVPA. Over residues 31 to 45 the composition is skewed to low complexity; it reads GKTAGRGTKGTGARK.

The protein belongs to the universal ribosomal protein uL15 family. Part of the 50S ribosomal subunit.

Binds to the 23S rRNA. This Corynebacterium aurimucosum (strain ATCC 700975 / DSM 44827 / CIP 107346 / CN-1) (Corynebacterium nigricans) protein is Large ribosomal subunit protein uL15.